Consider the following 643-residue polypeptide: Long-chain fatty acid transport protein 4 (643 aa).

The next 2 membrane-spanning stretches (helical) occupy residues 20-42 (LPWT…WRFI) and 139-156 (FVGL…AALI). 243 to 254 (YIYTSGTTGLPK) serves as a coordination point for AMP.

Belongs to the ATP-dependent AMP-binding enzyme family.

It localises to the endoplasmic reticulum membrane. It carries out the reaction a fatty acid(in) = a fatty acid(out). It catalyses the reaction (9Z,12Z)-octadecadienoate(out) = (9Z,12Z)-octadecadienoate(in). The enzyme catalyses (9Z)-octadecenoate(out) = (9Z)-octadecenoate(in). The catalysed reaction is hexadecanoate(out) = hexadecanoate(in). It carries out the reaction a long-chain fatty acid + ATP + CoA = a long-chain fatty acyl-CoA + AMP + diphosphate. It catalyses the reaction (5Z,8Z,11Z,14Z)-eicosatetraenoate + ATP + CoA = (5Z,8Z,11Z,14Z)-eicosatetraenoyl-CoA + AMP + diphosphate. The enzyme catalyses (9Z)-octadecenoate + ATP + CoA = (9Z)-octadecenoyl-CoA + AMP + diphosphate. The catalysed reaction is hexadecanoate + ATP + CoA = hexadecanoyl-CoA + AMP + diphosphate. It carries out the reaction (E)-hexadec-2-enoate + ATP + CoA = (2E)-hexadecenoyl-CoA + AMP + diphosphate. It catalyses the reaction a very long-chain fatty acid + ATP + CoA = a very long-chain fatty acyl-CoA + AMP + diphosphate. The enzyme catalyses tetracosanoate + ATP + CoA = tetracosanoyl-CoA + AMP + diphosphate. Mediates the import of long-chain fatty acids (LCFA) into the cell by facilitating their transport across cell membranes. Appears to be the principal fatty acid transporter in small intestinal enterocytes. Also functions as an acyl-CoA ligase catalyzing the ATP-dependent formation of fatty acyl-CoA using LCFA and very-long-chain fatty acids (VLCFA) as substrates, which prevents fatty acid efflux from cells and might drive more fatty acid uptake. Plays a role in the formation of the epidermal barrier. Required for fat absorption in early embryogenesis. Probably involved in fatty acid transport across the blood barrier. Indirectly inhibits RPE65 via substrate competition and via production of VLCFA derivatives like lignoceroyl-CoA. Prevents light-induced degeneration of rods and cones. This chain is Long-chain fatty acid transport protein 4 (SLC27A4), found in Pongo abelii (Sumatran orangutan).